Here is a 254-residue protein sequence, read N- to C-terminus: RxLR effector protein CRE5 (254 aa).

The signal sequence occupies residues 1 to 19; that stretch reads MQTIQLIIFVAFVLSRAAA. Asn-49 carries an N-linked (GlcNAc...) asparagine glycan. Positions 53 to 63 match the RxLR-dEER motif; that stretch reads RSLRQHEGEDR. Positions 191 to 254 constitute a Nudix hydrolase domain; that stretch reads SRWLSAGVVT…MEEGGVCRAL (64 aa). The Nudix box motif lies at 228-249; sequence GGWDRGEKIKKAALREVMEEGG.

In the N-terminal section; belongs to the RxLR effector family. This sequence in the C-terminal section; belongs to the Nudix hydrolase family.

The protein resides in the secreted. It localises to the host cytoplasm. It is found in the host nucleus. Its subcellular location is the host nucleolus. Functionally, effector that is involved in host plant infection. Contributes to virulence during the early infection stage, by inhibiting plant defense responses induced by both PAMP-triggered immunity (PTI) and effector-triggered immunity (ETI). This chain is RxLR effector protein CRE5, found in Phytophthora infestans (strain T30-4) (Potato late blight agent).